A 563-amino-acid polypeptide reads, in one-letter code: Probable trehalase (563 aa).

Substrate is bound by residues R154, 161 to 162 (WD), N198, 207 to 209 (RSQ), 274 to 276 (RPE), and G307. Residues D309 and E517 each act as proton donor/acceptor in the active site. Substrate is bound at residue E532.

This sequence belongs to the glycosyl hydrolase 37 family.

The catalysed reaction is alpha,alpha-trehalose + H2O = alpha-D-glucose + beta-D-glucose. Functionally, involved in the regulation of trehalose content by hydrolyzing trehalose to glucose. The polypeptide is Probable trehalase (Oryza sativa subsp. japonica (Rice)).